The sequence spans 266 residues: Glycine--tRNA ligase beta subunit (266 aa).

This sequence belongs to the class-II aminoacyl-tRNA synthetase family. In terms of assembly, tetramer of two alpha and two beta subunits.

The protein localises to the cytoplasm. The catalysed reaction is tRNA(Gly) + glycine + ATP = glycyl-tRNA(Gly) + AMP + diphosphate. This is Glycine--tRNA ligase beta subunit (glyS) from Moraxella catarrhalis (Branhamella catarrhalis).